The chain runs to 825 residues: Probable phosphoketolase (825 aa).

It belongs to the XFP family. The cofactor is thiamine diphosphate.

This Schizosaccharomyces pombe (strain 972 / ATCC 24843) (Fission yeast) protein is Probable phosphoketolase.